Reading from the N-terminus, the 432-residue chain is Glutamate-1-semialdehyde 2,1-aminomutase (432 aa).

Lysine 269 carries the N6-(pyridoxal phosphate)lysine modification.

This sequence belongs to the class-III pyridoxal-phosphate-dependent aminotransferase family. HemL subfamily. In terms of assembly, homodimer. Requires pyridoxal 5'-phosphate as cofactor.

Its subcellular location is the cytoplasm. The enzyme catalyses (S)-4-amino-5-oxopentanoate = 5-aminolevulinate. It participates in porphyrin-containing compound metabolism; protoporphyrin-IX biosynthesis; 5-aminolevulinate from L-glutamyl-tRNA(Glu): step 2/2. The sequence is that of Glutamate-1-semialdehyde 2,1-aminomutase from Desulforamulus reducens (strain ATCC BAA-1160 / DSM 100696 / MI-1) (Desulfotomaculum reducens).